The chain runs to 480 residues: Speriolin (480 aa).

The interval 1 to 76 is necessary for targeting to centrosomes; sequence MSLLTSYEGL…HQGVFLPPAS (76 aa). A coiled-coil region spans residues 2-45; that stretch reads SLLTSYEGLRHQIERLVRENEELKKLVRLIRENQELKSAIKTQA. Disordered regions lie at residues 252 to 297 and 305 to 324; these read INNI…SRVM and VEME…DNPR.

Belongs to the speriolin family. In terms of assembly, found in a complex with CDC20, CDC27 and TUBG1. Interacts with CDC20. In terms of tissue distribution, expressed in testis. Expressed in pachyten spermatocytes, spermatids and epididymal sperm (at protein level).

It localises to the cytoplasm. The protein resides in the cytoskeleton. It is found in the microtubule organizing center. Its subcellular location is the centrosome. This is Speriolin (Spatc1) from Mus musculus (Mouse).